The chain runs to 524 residues: BEL1-like homeodomain protein 3 (524 aa).

The segment at 171-187 is SR/KY domain; the sequence is SRYLKPTQQLLDEVVSV. Basic and acidic residues-rich tracts occupy residues 195-205 and 216-235; these read NKKMKNDKGQD and EDDK…ELQS. The disordered stretch occupies residues 195–236; it reads NKKMKNDKGQDFHNGSSDNITEDDKSQSQELSPSERQELQSK. The BELL domain stretch occupies residues 229-300; sequence ERQELQSKKS…CLRDAIKEQI (72 aa). Positions 346–408 form a DNA-binding region, homeobox; sequence AWRPQRGLPE…NARVRLWKPM (63 aa). Residues 429–463 are disordered; it reads QDTKKMQETSQLKHEDSSSSQQQNQGNNNNNIPYT. Residues 430–445 are compositionally biased toward basic and acidic residues; the sequence is DTKKMQETSQLKHEDS. Positions 446–459 are enriched in low complexity; that stretch reads SSSQQQNQGNNNNN.

It belongs to the TALE/BELL homeobox family. As to quaternary structure, may form heterodimeric complex with the TALE/KNOX protein STM. Interacts with OFP1, OFP2, OFP3, OFP4, OFP5 and OFP15.

The protein localises to the nucleus. Its function is as follows. Transcription factor that is responsive of the nuclear import of SHOOT MERISTEMLESS (STM). This chain is BEL1-like homeodomain protein 3 (BLH3), found in Arabidopsis thaliana (Mouse-ear cress).